The sequence spans 160 residues: Na(+)/H(+) antiporter subunit E1 (160 aa).

Helical transmembrane passes span 1 to 21 (MAIQILVNLILSVFWLFVTGS), 27 to 47 (FILGYLFALLLVYIMRGVLPG), 49 to 69 (FYLITVYKIIKLFLVFLIELI), and 101 to 121 (WQIVLLSNLITLTPGTIVLGI).

Belongs to the CPA3 antiporters (TC 2.A.63) subunit E family. In terms of assembly, may form a heterooligomeric complex that consists of seven subunits: mnhA1, mnhB1, mnhC1, mnhD1, mnhE1, mnhF1 and mnhG1.

It is found in the cell membrane. In terms of biological role, mnh complex is a Na(+)/H(+) antiporter involved in Na(+) excretion. This chain is Na(+)/H(+) antiporter subunit E1 (mnhE1), found in Staphylococcus saprophyticus subsp. saprophyticus (strain ATCC 15305 / DSM 20229 / NCIMB 8711 / NCTC 7292 / S-41).